The primary structure comprises 265 residues: MKKTFLVIGNPIKHSLSPKLHNYWIKKYKINATYEKNLLDHSEIEDLIFNIRKEKIHGLNITVPFKKMIIPFLDELSEEAEISQSVNTIYKRDNKIIGDNTDIEGFKLSLEKTEQNVKNKKALILGAGGVVSSIIIALKKIQIEKIYLSNRTELKAIELKKHFPEIEIIKWGETIDFDMIINATSIGLKEEDEININYQKISKDKFFYDVIYNPPETNFLKNAKKYGGITKNGKMMFIYQAQKAFFIWHKIVPEVDSETINLLDV.

Shikimate contacts are provided by residues 15-17 (SLS) and threonine 62. The active-site Proton acceptor is the lysine 66. Glutamate 78 contacts NADP(+). Asparagine 87 and aspartate 102 together coordinate shikimate. Residues 126-130 (GAGGV), 150-155 (NRTELK), and valine 210 each bind NADP(+). Residue tyrosine 212 coordinates shikimate. Position 233 (glycine 233) interacts with NADP(+).

Belongs to the shikimate dehydrogenase family. Homodimer.

The enzyme catalyses shikimate + NADP(+) = 3-dehydroshikimate + NADPH + H(+). Its pathway is metabolic intermediate biosynthesis; chorismate biosynthesis; chorismate from D-erythrose 4-phosphate and phosphoenolpyruvate: step 4/7. Functionally, involved in the biosynthesis of the chorismate, which leads to the biosynthesis of aromatic amino acids. Catalyzes the reversible NADPH linked reduction of 3-dehydroshikimate (DHSA) to yield shikimate (SA). In Pelagibacter ubique (strain HTCC1062), this protein is Shikimate dehydrogenase (NADP(+)).